A 293-amino-acid chain; its full sequence is uncharacterized protein (293 aa).

Positions 1–58 (MQLQELHMLVVLAEELNMRKAAERLFVSQPALSQRLQTIEKAWGTKIFLRSQKGLTVT) constitute an HTH lysR-type domain. The H-T-H motif DNA-binding region spans 18-37 (MRKAAERLFVSQPALSQRLQ).

It belongs to the LysR transcriptional regulatory family.

This is an uncharacterized protein from Bacillus subtilis (strain 168).